A 227-amino-acid chain; its full sequence is Transmembrane emp24 domain-containing protein 4 (227 aa).

Positions 1 to 29 (MAGVGAGPLRAMGRQALLLLALCATGAQG) are cleaved as a signal peptide. The Lumenal portion of the chain corresponds to 30 to 194 (LYFHIGETEK…RLTSESTNQR (165 aa)). The 99-residue stretch at 39–137 (KRCFIEEIPD…KLRVHLDIQV (99 aa)) folds into the GOLD domain. Asn-117 is a glycosylation site (N-linked (GlcNAc...) asparagine). Residues 147–176 (IAAKDKLTELQLRARQLLDQVEQIQKEQDY) are a coiled coil. The chain crosses the membrane as a helical span at residues 195–212 (VLWWSIAQTVILILTGIW). The Cytoplasmic portion of the chain corresponds to 213-227 (QMRHLKSFFEAKKLV). Residues 220 to 221 (FF) carry the COPII vesicle coat-binding motif. A COPI vesicle coat-binding motif is present at residues 220–227 (FFEAKKLV).

It belongs to the EMP24/GP25L family.

Its subcellular location is the endoplasmic reticulum membrane. In terms of biological role, involved in vesicular protein trafficking, mainly in the early secretory pathway. targeting. Involved in the maintenance of the Golgi apparatus. Appears to play a role in the biosynthesis of secreted cargo including processing. Involved in endoplasmic reticulum stress response. May play a role in the regulation of heat-shock response and apoptosis. This is Transmembrane emp24 domain-containing protein 4 (TMED4) from Homo sapiens (Human).